The sequence spans 213 residues: Octanoyltransferase (213 aa).

Positions 32–207 constitute a BPL/LPL catalytic domain; sequence ENSHDEIWLV…NILALLNNPP (176 aa). Residues 71 to 78, 138 to 140, and 151 to 153 contribute to the substrate site; these read RGGQVTYH, SLG, and GLA. Cys-169 functions as the Acyl-thioester intermediate in the catalytic mechanism.

The protein belongs to the LipB family.

It is found in the cytoplasm. The enzyme catalyses octanoyl-[ACP] + L-lysyl-[protein] = N(6)-octanoyl-L-lysyl-[protein] + holo-[ACP] + H(+). Its pathway is protein modification; protein lipoylation via endogenous pathway; protein N(6)-(lipoyl)lysine from octanoyl-[acyl-carrier-protein]: step 1/2. Catalyzes the transfer of endogenously produced octanoic acid from octanoyl-acyl-carrier-protein onto the lipoyl domains of lipoate-dependent enzymes. Lipoyl-ACP can also act as a substrate although octanoyl-ACP is likely to be the physiological substrate. In Salmonella typhi, this protein is Octanoyltransferase.